Reading from the N-terminus, the 372-residue chain is Riboflavin biosynthesis protein RibD (372 aa).

Residues 1-150 (MLEFSSQDCV…KGFLKRMRQG (150 aa)) form a deaminase region. A CMP/dCMP-type deaminase domain is found at 6-128 (SQDCVFMQRA…MLSDAGIEST (123 aa)). His55 is a binding site for Zn(2+). Glu57 serves as the catalytic Proton donor. Zn(2+) contacts are provided by Cys80 and Cys89. The interval 151 to 372 (MPFVQLKLAM…IKLTYTPKGV (222 aa)) is reductase. NADP(+)-binding positions include Ala159 and 166 to 169 (TAMA). A substrate-binding site is contributed by Ser173. Trp175 provides a ligand contact to NADP(+). Arg189 provides a ligand contact to substrate. NADP(+)-binding residues include Thr201 and Asp205. Residues Leu209 and Arg212 each coordinate substrate. Ser239 provides a ligand contact to NADP(+). Glu302 serves as a coordination point for substrate. Residue 304–310 (GANLSGS) coordinates NADP(+).

It in the N-terminal section; belongs to the cytidine and deoxycytidylate deaminase family. In the C-terminal section; belongs to the HTP reductase family. The cofactor is Zn(2+).

It carries out the reaction 2,5-diamino-6-hydroxy-4-(5-phosphoribosylamino)-pyrimidine + H2O + H(+) = 5-amino-6-(5-phospho-D-ribosylamino)uracil + NH4(+). The catalysed reaction is 5-amino-6-(5-phospho-D-ribitylamino)uracil + NADP(+) = 5-amino-6-(5-phospho-D-ribosylamino)uracil + NADPH + H(+). It participates in cofactor biosynthesis; riboflavin biosynthesis; 5-amino-6-(D-ribitylamino)uracil from GTP: step 2/4. The protein operates within cofactor biosynthesis; riboflavin biosynthesis; 5-amino-6-(D-ribitylamino)uracil from GTP: step 3/4. Functionally, converts 2,5-diamino-6-(ribosylamino)-4(3h)-pyrimidinone 5'-phosphate into 5-amino-6-(ribosylamino)-2,4(1h,3h)-pyrimidinedione 5'-phosphate. This chain is Riboflavin biosynthesis protein RibD (ribD), found in Haemophilus influenzae (strain ATCC 51907 / DSM 11121 / KW20 / Rd).